A 443-amino-acid polypeptide reads, in one-letter code: Mitochondrial enolase superfamily member 1 (443 aa).

Residues 24–26 and tyrosine 34 contribute to the substrate site; that span reads GSD. Position 148 is a phosphoserine (serine 148). Lysine 220 contacts substrate. Lysine 222 (proton donor/acceptor) is an active-site residue. Aspartate 250 contacts Mg(2+). Substrate contacts are provided by residues asparagine 252, glutamate 276, glutamate 305, 355 to 357, and glutamate 386; that span reads HAG. Mg(2+)-binding residues include glutamate 276 and glutamate 305. The active site involves histidine 355.

The protein belongs to the mandelate racemase/muconate lactonizing enzyme family. ENOSF1 subfamily. It depends on Mg(2+) as a cofactor. In terms of processing, could be sumoylated.

Its subcellular location is the mitochondrion. It catalyses the reaction L-fuconate = 2-dehydro-3-deoxy-L-fuconate + H2O. Functionally, plays a role in the catabolism of L-fucose, a sugar that is part of the carbohydrates that are attached to cellular glycoproteins. Catalyzes the dehydration of L-fuconate to 2-keto-3-deoxy-L-fuconate by the abstraction of the 2-proton to generate an enediolate intermediate that is stabilized by the magnesium ion. May down-regulate thymidylate synthase activity, possibly already at the RNA level, by promoting the degradation of TYMS mRNA via an antisense RNA-based mechanism. In Bos taurus (Bovine), this protein is Mitochondrial enolase superfamily member 1 (ENOSF1).